The primary structure comprises 447 residues: Voltage-gated purine nucleotide uniporter SLC17A9 (447 aa).

The tract at residues 1-26 (MPSQRSSLMQPIPEETRKTPSAAAED) is disordered. A compositionally biased stretch (basic and acidic residues) spans 14-26 (EETRKTPSAAAED). Helical transmembrane passes span 36–58 (LWTG…MPVC), 74–94 (GIVL…GGHL), 103–123 (VILL…LLAH), 129–149 (LAFV…YFPA), 169–189 (TVGA…SVLL), 197–217 (VFYF…KYLL), 252–272 (VWAV…LLSW), 287–307 (WVFN…SGFI), 327–347 (VMGL…TSFL), 380–400 (GFLF…GVCL), and 413–433 (CVFH…LVFG).

The protein belongs to the major facilitator superfamily. Sodium/anion cotransporter family.

Its subcellular location is the cytoplasmic vesicle. The protein resides in the secretory vesicle. It localises to the chromaffin granule membrane. It is found in the secretory vesicle membrane. The protein localises to the lysosome membrane. It catalyses the reaction ATP(in) = ATP(out). The catalysed reaction is ADP(in) = ADP(out). It carries out the reaction GTP(in) = GTP(out). With respect to regulation, activity is chloride-dependent. Its function is as follows. Voltage-gated ATP nucleotide uniporter that can also transport the purine nucleotides ADP and GTP. Uses the membrane potential as the driving force to control ATP accumulation in lysosomes and secretory vesicles. By controlling ATP storage in lysosomes, regulates ATP-dependent proteins of these organelles. Also indirectly regulates the exocytosis of ATP through its import into lysosomes in astrocytes and secretory vesicles such as adrenal chromaffin granules, mucin granules and synaptic vesicles. The protein is Voltage-gated purine nucleotide uniporter SLC17A9 of Rattus norvegicus (Rat).